The following is a 544-amino-acid chain: Probable protein kinase UbiB (544 aa).

In terms of domain architecture, Protein kinase spans aspartate 123–leucine 501. Residues leucine 129–valine 137 and lysine 152 contribute to the ATP site. Aspartate 287 (proton acceptor) is an active-site residue. A helical membrane pass occupies residues leucine 515–phenylalanine 537.

The protein belongs to the ABC1 family. UbiB subfamily.

It localises to the cell inner membrane. It participates in cofactor biosynthesis; ubiquinone biosynthesis [regulation]. Functionally, is probably a protein kinase regulator of UbiI activity which is involved in aerobic coenzyme Q (ubiquinone) biosynthesis. This is Probable protein kinase UbiB from Aliivibrio fischeri (strain ATCC 700601 / ES114) (Vibrio fischeri).